Reading from the N-terminus, the 247-residue chain is Trypsin (247 aa).

The N-terminal stretch at 1-21 is a signal peptide; it reads LTTVISYFALVAFALVGVSYA. The propeptide at 22–30 is activation peptide; the sequence is TPKASINGR. The Peptidase S1 domain occupies 31–247; that stretch reads IVGGEMTDIS…QSNFPGVYGI (217 aa). Cys-61 and Cys-77 are disulfide-bonded. Active-site charge relay system residues include His-76 and Asp-120. Cystine bridges form between Cys-185/Cys-201 and Cys-212/Cys-236. Catalysis depends on Ser-216, which acts as the Charge relay system.

The protein belongs to the peptidase S1 family. In terms of tissue distribution, midgut.

Its subcellular location is the secreted. It is found in the extracellular space. It catalyses the reaction Preferential cleavage: Arg-|-Xaa, Lys-|-Xaa.. This is Trypsin from Simulium vittatum (Striped black fly).